Reading from the N-terminus, the 609-residue chain is UvrABC system protein C (609 aa).

A GIY-YIG domain is found at 16 to 94 (SSPGVYRMYD…IKQYMPKYNV (79 aa)). In terms of domain architecture, UVR spans 203 to 238 (QQVTKALVAKMEQAAVELNYEQAARYRDQITALRRV).

The protein belongs to the UvrC family. Interacts with UvrB in an incision complex.

It is found in the cytoplasm. Its function is as follows. The UvrABC repair system catalyzes the recognition and processing of DNA lesions. UvrC both incises the 5' and 3' sides of the lesion. The N-terminal half is responsible for the 3' incision and the C-terminal half is responsible for the 5' incision. The protein is UvrABC system protein C of Shewanella piezotolerans (strain WP3 / JCM 13877).